The sequence spans 175 residues: Probable coatomer subunit zeta-A (175 aa).

This sequence belongs to the adaptor complexes small subunit family. In terms of assembly, oligomeric complex that consists of at least the alpha, beta, beta', gamma, delta, epsilon and zeta subunits.

The protein localises to the cytoplasm. Its subcellular location is the golgi apparatus membrane. It localises to the cytoplasmic vesicle. The protein resides in the COPI-coated vesicle membrane. Functionally, the coatomer is a cytosolic protein complex that binds to dilysine motifs and reversibly associates with Golgi non-clathrin-coated vesicles, which further mediate biosynthetic protein transport from the ER, via the Golgi up to the trans Golgi network. Coatomer complex is required for budding from Golgi membranes, and is essential for the retrograde Golgi-to-ER transport of dilysine-tagged proteins. The zeta subunit may be involved in regulating the coat assembly and, hence, the rate of biosynthetic protein transport due to its association-dissociation properties with the coatomer complex. This Dictyostelium discoideum (Social amoeba) protein is Probable coatomer subunit zeta-A (copZa).